The sequence spans 143 residues: D-aminoacyl-tRNA deacylase (143 aa).

The Gly-cisPro motif, important for rejection of L-amino acids motif lies at 135–136 (GP).

Belongs to the DTD family. As to quaternary structure, homodimer.

Its subcellular location is the cytoplasm. It carries out the reaction glycyl-tRNA(Ala) + H2O = tRNA(Ala) + glycine + H(+). The catalysed reaction is a D-aminoacyl-tRNA + H2O = a tRNA + a D-alpha-amino acid + H(+). In terms of biological role, an aminoacyl-tRNA editing enzyme that deacylates mischarged D-aminoacyl-tRNAs. Also deacylates mischarged glycyl-tRNA(Ala), protecting cells against glycine mischarging by AlaRS. Acts via tRNA-based rather than protein-based catalysis; rejects L-amino acids rather than detecting D-amino acids in the active site. By recycling D-aminoacyl-tRNA to D-amino acids and free tRNA molecules, this enzyme counteracts the toxicity associated with the formation of D-aminoacyl-tRNA entities in vivo and helps enforce protein L-homochirality. The sequence is that of D-aminoacyl-tRNA deacylase from Mycobacterium marinum (strain ATCC BAA-535 / M).